The following is a 185-amino-acid chain: Elongation factor P (185 aa).

This sequence belongs to the elongation factor P family.

It localises to the cytoplasm. It participates in protein biosynthesis; polypeptide chain elongation. Functionally, involved in peptide bond synthesis. Stimulates efficient translation and peptide-bond synthesis on native or reconstituted 70S ribosomes in vitro. Probably functions indirectly by altering the affinity of the ribosome for aminoacyl-tRNA, thus increasing their reactivity as acceptors for peptidyl transferase. The protein is Elongation factor P of Syntrophomonas wolfei subsp. wolfei (strain DSM 2245B / Goettingen).